We begin with the raw amino-acid sequence, 839 residues long: Protein translocase subunit SecA (839 aa).

ATP-binding positions include glutamine 85, 103 to 107, and aspartate 493; that span reads GEGKT. A compositionally biased stretch (basic and acidic residues) spans 780-790; that stretch reads QIHEQERERAS. The disordered stretch occupies residues 780–839; sequence QIHEQERERASQRATTAAPQNIQSQQSANTDDLPKVERNEACPCGSGKKFKNCHGRKSFS. Polar residues predominate over residues 791–809; it reads QRATTAAPQNIQSQQSANT. 4 residues coordinate Zn(2+): cysteine 821, cysteine 823, cysteine 832, and histidine 833. Positions 827 to 839 are enriched in basic residues; it reads KKFKNCHGRKSFS.

It belongs to the SecA family. In terms of assembly, monomer and homodimer. Part of the essential Sec protein translocation apparatus which comprises SecA, SecYEG and auxiliary proteins SecDF. Other proteins may also be involved. Zn(2+) is required as a cofactor.

The protein resides in the cell membrane. It is found in the cytoplasm. It carries out the reaction ATP + H2O + cellular proteinSide 1 = ADP + phosphate + cellular proteinSide 2.. Functionally, part of the Sec protein translocase complex. Interacts with the SecYEG preprotein conducting channel. Has a central role in coupling the hydrolysis of ATP to the transfer of proteins into and across the cell membrane, serving as an ATP-driven molecular motor driving the stepwise translocation of polypeptide chains across the membrane. The sequence is that of Protein translocase subunit SecA from Streptococcus pyogenes serotype M1.